A 266-amino-acid chain; its full sequence is 5'-nucleotidase SurE (266 aa).

A divalent metal cation contacts are provided by D8, D9, S42, and N98.

This sequence belongs to the SurE nucleotidase family. The cofactor is a divalent metal cation.

Its subcellular location is the cytoplasm. It carries out the reaction a ribonucleoside 5'-phosphate + H2O = a ribonucleoside + phosphate. Nucleotidase that shows phosphatase activity on nucleoside 5'-monophosphates. This is 5'-nucleotidase SurE from Methanocaldococcus jannaschii (strain ATCC 43067 / DSM 2661 / JAL-1 / JCM 10045 / NBRC 100440) (Methanococcus jannaschii).